The primary structure comprises 264 residues: Proteasome subunit alpha type-4 (264 aa).

Belongs to the peptidase T1A family. As to quaternary structure, the 26S proteasome consists of a 20S proteasome core and two 19S regulatory subunits. The 20S proteasome core is composed of 28 subunits that are arranged in four stacked rings, resulting in a barrel-shaped structure. The two end rings are each formed by seven alpha subunits, and the two central rings are each formed by seven beta subunits. The catalytic chamber with the active sites is on the inside of the barrel. Interacts with PI31.

It is found in the cytoplasm. It localises to the nucleus. The proteasome is a multicatalytic proteinase complex which is characterized by its ability to cleave peptides with Arg, Phe, Tyr, Leu, and Glu adjacent to the leaving group at neutral or slightly basic pH. The proteasome has an ATP-dependent proteolytic activity. The protein is Proteasome subunit alpha type-4 (Prosalpha3) of Drosophila melanogaster (Fruit fly).